The sequence spans 302 residues: Putative gluconeogenesis factor (302 aa).

The protein belongs to the gluconeogenesis factor family.

The protein resides in the cytoplasm. Required for morphogenesis under gluconeogenic growth conditions. The chain is Putative gluconeogenesis factor (ybhK) from Salmonella typhi.